We begin with the raw amino-acid sequence, 66 residues long: Nigrocin-2ISb (66 aa).

The N-terminal stretch at 1–22 is a signal peptide; the sequence is MFTLKKSMLLLFFLGTINLSLC. Residues 23–43 constitute a propeptide, removed in mature form; sequence QEERDAEEERRDEDNAKMEEI. Cysteine 60 and cysteine 66 are disulfide-bonded.

As to expression, expressed by the skin glands.

Its subcellular location is the secreted. In terms of biological role, has antimicrobial activity against Gram-negative bacterium E.coli ATCC 8739 (MIC=50 ug), against Gram positive bacteria S.aureus ATCC 6538 (MIC=3.1 ug), methicillin-resistant S.aureus ATCC 43300 (MIC=12.5 ug), B.subtilis ATCC 6633 (MIC=12.5 ug) and against fungus C.albicans ATCC 90028 (MIC=50 ug). This is Nigrocin-2ISb from Odorrana ishikawae (Ishikawa's frog).